A 67-amino-acid polypeptide reads, in one-letter code: Conotoxin Cl6.8 (67 aa).

The N-terminal stretch at 1–22 is a signal peptide; it reads MKVTAVLMVAVLVLTACQLTTA. Residues 23–39 constitute a propeptide that is removed on maturation; it reads NTTDYVRRILARKSTMS. 3 cysteine pairs are disulfide-bonded: Cys43/Cys58, Cys50/Cys62, and Cys57/Cys66. At Cys66 the chain carries Cysteine amide.

Belongs to the conotoxin O1 superfamily. In terms of tissue distribution, expressed by the venom duct.

It is found in the secreted. This chain is Conotoxin Cl6.8, found in Californiconus californicus (California cone).